We begin with the raw amino-acid sequence, 825 residues long: Probable inorganic carbon transporter subunit DabA (825 aa).

Positions 334, 336, 521, and 536 each coordinate Zn(2+).

It belongs to the inorganic carbon transporter (TC 9.A.2) DabA family. In terms of assembly, forms a complex with DabB. Requires Zn(2+) as cofactor.

It localises to the cell inner membrane. Part of an energy-coupled inorganic carbon pump. The protein is Probable inorganic carbon transporter subunit DabA of Acidithiobacillus ferrooxidans (strain ATCC 23270 / DSM 14882 / CIP 104768 / NCIMB 8455) (Ferrobacillus ferrooxidans (strain ATCC 23270)).